We begin with the raw amino-acid sequence, 389 residues long: Probable nitrate transporter NarT (389 aa).

12 consecutive transmembrane segments (helical) span residues 14–34 (TLSL…MPFI), 45–65 (ISII…PFGY), 69–89 (IVGA…PIFF), 97–117 (GMLM…SVGV), 139–159 (GNIG…IIGW), 161–181 (TTVR…FIFG), 211–231 (WYFI…NYLV), 246–266 (GVFI…GDKF), 268–288 (AVKV…ILGI), 294–314 (LFTV…GLIF), 331–351 (IVSM…TYVA), and 353–373 (LTGS…IALF).

This sequence belongs to the major facilitator superfamily. Nitrate/nitrite porter (TC 2.A.1.8) family.

It localises to the cell membrane. Its function is as follows. Probably required for nitrate uptake under anoxic conditions. Also possibly involved in excretion of nitrite produced by the dissimilatory reduction of nitrate. The chain is Probable nitrate transporter NarT (narT) from Staphylococcus aureus (strain JH9).